We begin with the raw amino-acid sequence, 123 residues long: Chaperone protein SycN (123 aa).

Interacts with YscB to form a complex which specifically binds to YopN.

The protein localises to the cytoplasm. The protein resides in the cell inner membrane. Functionally, functions as a specific chaperone for YopN. It could facilitate the secretion and the subsequent translocation of YopN. The protein is Chaperone protein SycN (sycN) of Yersinia enterocolitica.